Here is a 33-residue protein sequence, read N- to C-terminus: MQPGTGLSFDISQILKQGSDPKQKLPERQAIVL.

Positions 1–33 are disordered; it reads MQPGTGLSFDISQILKQGSDPKQKLPERQAIVL.

This is an uncharacterized protein from Caenorhabditis elegans.